The primary structure comprises 637 residues: Phospholipase B (637 aa).

A signal peptide spans 1–19; that stretch reads MSIATATFAFSLFATIAFA. In terms of domain architecture, PLA2c spans 46–572; sequence DCPSNVTWIR…DTWCWAGDDN (527 aa). Residues Asn-50, Asn-56, Asn-122, Asn-231, Asn-246, Asn-272, Asn-314, Asn-343, Asn-387, Asn-433, Asn-481, Asn-501, Asn-528, Asn-553, Asn-572, Asn-594, and Asn-606 are each glycosylated (N-linked (GlcNAc...) asparagine).

The protein belongs to the lysophospholipase family. Post-translationally, N-glycosylated.

It localises to the secreted. The protein localises to the cell membrane. It catalyses the reaction a 1-acyl-sn-glycero-3-phosphocholine + H2O = sn-glycerol 3-phosphocholine + a fatty acid + H(+). With respect to regulation, inhibited by Fe(3+) ion. Exhibits phospholipase B (PLB), lysophospholipase (LPL) and lysophospholipase/transacylase (LPTA) activities. The polypeptide is Phospholipase B (PLB1) (Cryptococcus neoformans var. grubii serotype A (strain H99 / ATCC 208821 / CBS 10515 / FGSC 9487) (Filobasidiella neoformans var. grubii)).